The chain runs to 288 residues: Acetyl-coenzyme A carboxylase carboxyl transferase subunit beta (288 aa).

Positions 34 to 288 (LFAKCPGCKQ…TLLSFHGGVQ (255 aa)) constitute a CoA carboxyltransferase N-terminal domain. Zn(2+) contacts are provided by Cys-38, Cys-41, Cys-56, and Cys-59. A C4-type zinc finger spans residues 38-59 (CPGCKQAIYQKDLGQAKICPNC).

Belongs to the AccD/PCCB family. In terms of assembly, acetyl-CoA carboxylase is a heterohexamer composed of biotin carboxyl carrier protein (AccB), biotin carboxylase (AccC) and two subunits each of ACCase subunit alpha (AccA) and ACCase subunit beta (AccD). Zn(2+) is required as a cofactor.

Its subcellular location is the cytoplasm. It catalyses the reaction N(6)-carboxybiotinyl-L-lysyl-[protein] + acetyl-CoA = N(6)-biotinyl-L-lysyl-[protein] + malonyl-CoA. The protein operates within lipid metabolism; malonyl-CoA biosynthesis; malonyl-CoA from acetyl-CoA: step 1/1. Component of the acetyl coenzyme A carboxylase (ACC) complex. Biotin carboxylase (BC) catalyzes the carboxylation of biotin on its carrier protein (BCCP) and then the CO(2) group is transferred by the transcarboxylase to acetyl-CoA to form malonyl-CoA. The chain is Acetyl-coenzyme A carboxylase carboxyl transferase subunit beta from Streptococcus thermophilus (strain ATCC BAA-491 / LMD-9).